A 195-amino-acid chain; its full sequence is Pyridoxal 5'-phosphate synthase subunit PdxT (195 aa).

Residue 46–48 (GES) participates in L-glutamine binding. Cysteine 78 functions as the Nucleophile in the catalytic mechanism. L-glutamine-binding positions include arginine 107 and 135–136 (IR). Active-site charge relay system residues include histidine 172 and glutamate 174.

Belongs to the glutaminase PdxT/SNO family. In the presence of PdxS, forms a dodecamer of heterodimers. Only shows activity in the heterodimer.

It catalyses the reaction aldehydo-D-ribose 5-phosphate + D-glyceraldehyde 3-phosphate + L-glutamine = pyridoxal 5'-phosphate + L-glutamate + phosphate + 3 H2O + H(+). The catalysed reaction is L-glutamine + H2O = L-glutamate + NH4(+). The protein operates within cofactor biosynthesis; pyridoxal 5'-phosphate biosynthesis. In terms of biological role, catalyzes the hydrolysis of glutamine to glutamate and ammonia as part of the biosynthesis of pyridoxal 5'-phosphate. The resulting ammonia molecule is channeled to the active site of PdxS. This Corynebacterium jeikeium (strain K411) protein is Pyridoxal 5'-phosphate synthase subunit PdxT.